A 1696-amino-acid chain; its full sequence is Proprotein convertase subtilisin/kexin type 5 (1696 aa).

Positions 1-25 are cleaved as a signal peptide; it reads MPPAIVILALFTAALCAVNLRTVAA. Residues 26–110 constitute a propeptide that is removed on maturation; it reads DGPRIYRNEW…QQVVKRRVKR (85 aa). Positions 111–488 are catalytic; the sequence is RVKRVYSMYP…GLMDAGKMVE (378 aa). At 111 to 1618 the chain is on the extracellular side; sequence RVKRVYSMYP…ADSIPTNVAY (1508 aa). Positions 167–487 constitute a Peptidase S8 domain; that stretch reads QWSDMNVEAA…FGLMDAGKMV (321 aa). Residues aspartate 192 and histidine 233 each act as charge relay system in the active site. An N-linked (GlcNAc...) asparagine glycan is attached at asparagine 246. The Charge relay system role is filled by serine 407. The P/Homo B domain maps to 495–638; that stretch reads RVPEQHVCEE…KLILYGTAEH (144 aa). N-linked (GlcNAc...) asparagine glycosylation occurs at asparagine 529. Basic and acidic residues predominate over residues 643 to 657; sequence RDEESRPHTPQTREE. Positions 643-666 are disordered; the sequence is RDEESRPHTPQTREEPTDEEECED. The segment at 664–1649 is CRM (Cys-rich motif); sequence CEDGDYYDRS…LQARSNGRLC (986 aa). Residue asparagine 885 is glycosylated (N-linked (GlcNAc...) asparagine). The chain crosses the membrane as a helical span at residues 1619–1639; that stretch reads IAVATFICVVIVVLFFVVFGM. Over 1640 to 1696 the chain is Cytoplasmic; it reads LQARSNGRLCWAHKYQQVPTTRYEKMNDHVNILSQEDFYNEDSLSEDEIHSIDSTRH.

The protein belongs to the peptidase S8 family.

The protein resides in the secreted. The protein localises to the cell membrane. Serine endoprotease that processes various proproteins by cleavage at paired basic amino acids, recognizing the RXXX[KR]R consensus motif. Likely functions in the constitutive and regulated secretory pathways. The polypeptide is Proprotein convertase subtilisin/kexin type 5 (PC6) (Branchiostoma californiense (California lancelet)).